The chain runs to 263 residues: UPF0739 protein C1orf74 homolog (263 aa).

It belongs to the UPF0739 family.

The chain is UPF0739 protein C1orf74 homolog from Xenopus tropicalis (Western clawed frog).